A 444-amino-acid polypeptide reads, in one-letter code: MSGTGALMTVHVGQCGNQLAQAFWKSMVDEHGINERGQTTHEDDMNDKKDLLFYQADDDHYVPRAVLVDLEPRVINGMMQSPNFSNLFNTDNIFMSDHGGGAGNNWASGYCQGQEVQEKIMDIIIREAENTNNLDGILFTHSVSGGTGSGTGSLLLERLREAFPKKVIQTYSVFANSDTSTDVVVHPYNWVLSMQRLIENPDHVVVLDNAALHRLAAGKFKTDTPTFDHINSLVARIMSTSTAPYRFNSAMCPSIRYLDLAPFPPMHFIQSAISPVVDPNENFTRKTSVADVTRFLLKPTSMMVSTASRVRPNDCMLSAYMFLQGQIEAHTIMTAEQNVDFAIRRPPFYMLKPLRMMHAPLSPYVRPQYKVSGLLLNNSTSVAPLFESLLSKYDKLRSKRAFIDKFEKIDNFSLDMMDDAMHIVQDLLDEYKAVVQKDYLTRGL.

Position 144-150 (S144–G150) interacts with GTP.

The protein belongs to the tubulin family.

The protein resides in the cytoplasm. It is found in the cytoskeleton. It localises to the microtubule organizing center. Its subcellular location is the centrosome. The protein localises to the cell junction. The protein resides in the hemidesmosome. It is found in the adherens junction. In terms of biological role, tubulin is the major constituent of microtubules. The gamma chain is found at microtubule organizing centers (MTOC) such as the spindle poles or the centrosome, suggesting that it is involved in the minus-end nucleation of microtubule assembly. This is Tubulin gamma chain (tbg-1) from Caenorhabditis elegans.